The chain runs to 61 residues: Small ribosomal subunit protein uS14 (61 aa).

4 residues coordinate Zn(2+): Cys24, Cys27, Cys40, and Cys43.

It belongs to the universal ribosomal protein uS14 family. Zinc-binding uS14 subfamily. As to quaternary structure, part of the 30S ribosomal subunit. Contacts proteins S3 and S10. It depends on Zn(2+) as a cofactor.

In terms of biological role, binds 16S rRNA, required for the assembly of 30S particles and may also be responsible for determining the conformation of the 16S rRNA at the A site. The protein is Small ribosomal subunit protein uS14 of Dictyoglomus thermophilum (strain ATCC 35947 / DSM 3960 / H-6-12).